The sequence spans 718 residues: Protein Smaug homolog 1 (718 aa).

At Ser168 the chain carries Phosphoserine. The tract at residues Ala278–Asp310 is disordered. Residues Ser323–Glu396 form the SAM domain. Disordered stretches follow at residues Ala417 to His474 and Asn572 to Ile601. Position 420 is a phosphoserine (Ser420). Thr424 bears the Phosphothreonine mark. Low complexity predominate over residues Gly453–Gly466. Arg573 carries the post-translational modification Omega-N-methylarginine. Ser580 is subject to Phosphoserine.

This sequence belongs to the SMAUG family.

The protein resides in the cytoplasm. It localises to the cell projection. It is found in the dendrite. The protein localises to the synapse. Its subcellular location is the synaptosome. Functionally, acts as a translational repressor of SRE-containing messengers. The polypeptide is Protein Smaug homolog 1 (SAMD4A) (Macaca fascicularis (Crab-eating macaque)).